Consider the following 214-residue polypeptide: CASP-like protein UU5 (214 aa).

The tract at residues 1-20 (MSTVAQDSAPGGGKIQDAME) is disordered. At 1–57 (MSTVAQDSAPGGGKIQDAMEQGAPGASSAAVVPEGGHYTQTPSPAFQAVKKNINHMS) the chain is on the cytoplasmic side. A helical transmembrane segment spans residues 58–78 (AFSLGLRVAEFVLSVIAFSLM). Residues 79-99 (ASADQNGAVYSTFTSYSFVLA) lie on the Extracellular side of the membrane. A helical membrane pass occupies residues 100–120 (VNVLVVFYTIGQIIMSVLLLV). Topologically, residues 121-138 (SGSTPKKIYLFITFGCDQ) are cytoplasmic. A helical membrane pass occupies residues 139–159 (LSAFLLMAAGAAGASVALIIN). The Extracellular portion of the chain corresponds to 160–193 (RGGVTDAYGNGCIDGKITSFCSHAQASVAFTFLS). Residues 194–214 (FFCMVISSLLGVYSLAPYLIL) traverse the membrane as a helical segment.

This sequence belongs to the Casparian strip membrane proteins (CASP) family. As to quaternary structure, homodimer and heterodimers.

Its subcellular location is the cell membrane. The sequence is that of CASP-like protein UU5 from Physcomitrium patens (Spreading-leaved earth moss).